The sequence spans 336 residues: Tryptophan--tRNA ligase (336 aa).

ATP contacts are provided by residues 11 to 13 (TTT) and 19 to 20 (GN). The short motif at 12–20 (TTGIPHLGN) is the 'HIGH' region element. Residue D145 participates in L-tryptophan binding. Residues 157–159 (GRD), L196, and 203–207 (KMSKS) each bind ATP. A 'KMSKS' region motif is present at residues 203-207 (KMSKS).

This sequence belongs to the class-I aminoacyl-tRNA synthetase family. As to quaternary structure, homodimer.

The protein localises to the cytoplasm. It carries out the reaction tRNA(Trp) + L-tryptophan + ATP = L-tryptophyl-tRNA(Trp) + AMP + diphosphate + H(+). Its function is as follows. Catalyzes the attachment of tryptophan to tRNA(Trp). The polypeptide is Tryptophan--tRNA ligase (Neisseria meningitidis serogroup A / serotype 4A (strain DSM 15465 / Z2491)).